The following is a 271-amino-acid chain: Gasdermin bGSDM (271 aa).

Cys7 carries S-palmitoyl cysteine lipidation. 4 beta stranded membrane-spanning segments follow: residues 74 to 90, 102 to 120, 168 to 185, and 194 to 210; these read IAGTQSADLDVDLGLSV, TLGVDAAFARAATVQFEFS, RINVAAKDSNKQSLGLNL, and ANVKIAAAAASGSTVSF.

It belongs to the bacterial gasdermin family. As to quaternary structure, monomer. In terms of assembly, forms large, homooligomeric ring-shaped pores when inserted in membranes. In terms of processing, palmitoylation helps stabilize the inactive state; may self palmitoylate. Palmitoylation plays a significant role in pore formation.

The protein resides in the cytoplasm. The protein localises to the cell inner membrane. The full-length protein before cleavage is inactive: intramolecular interactions between the N-terminal domain and the C-terminal region as well as the lipid modification, mediate autoinhibition. The pyroptosis-like-inducing activity is carried by the released N-terminal domain (Gasdermin bGSDM, N-terminus). Functionally, involved in defense against bacteriophages. When this probable 4 gene operon (bGSDM-FE772_23060-FE772_23065-FE772_23070) is inserted into E.coli it provides nearly 100-fold protection against phages T5 and T6 and about 8-fold against phage T4. The operon without bGSDM no longer protects against phage. Cleavage of this precursor by its dedicated protease(s) releases the active moiety (gasdermin bGSDM, N-terminus) which inserts into membranes, forming pores and triggering cell death. In terms of biological role, pore-forming protein that causes membrane permeabilization via a pyroptosis-like activity. Makes ring-like pores when released. This is Gasdermin bGSDM from Lysobacter enzymogenes.